Reading from the N-terminus, the 504-residue chain is Glucose-6-phosphate isomerase (504 aa).

Glu-333 acts as the Proton donor in catalysis. Catalysis depends on residues His-364 and Lys-473.

Belongs to the GPI family.

It localises to the cytoplasm. The enzyme catalyses alpha-D-glucose 6-phosphate = beta-D-fructose 6-phosphate. The protein operates within carbohydrate biosynthesis; gluconeogenesis. It participates in carbohydrate degradation; glycolysis; D-glyceraldehyde 3-phosphate and glycerone phosphate from D-glucose: step 2/4. In terms of biological role, catalyzes the reversible isomerization of glucose-6-phosphate to fructose-6-phosphate. This chain is Glucose-6-phosphate isomerase, found in Xanthomonas oryzae pv. oryzae (strain PXO99A).